We begin with the raw amino-acid sequence, 343 residues long: uncharacterized protein (343 aa).

This sequence belongs to the histone deacetylase family.

Putative deacetylase. This is an uncharacterized protein from Methanocaldococcus jannaschii (strain ATCC 43067 / DSM 2661 / JAL-1 / JCM 10045 / NBRC 100440) (Methanococcus jannaschii).